Consider the following 622-residue polypeptide: Elongation factor 4 (622 aa).

One can recognise a tr-type G domain in the interval 17–201 (ALIRNFCIIA…KVVAEVPAPV (185 aa)). GTP-binding positions include 29 to 34 (DHGKST) and 148 to 151 (NKID).

Belongs to the TRAFAC class translation factor GTPase superfamily. Classic translation factor GTPase family. LepA subfamily.

It is found in the cell membrane. The enzyme catalyses GTP + H2O = GDP + phosphate + H(+). In terms of biological role, required for accurate and efficient protein synthesis under certain stress conditions. May act as a fidelity factor of the translation reaction, by catalyzing a one-codon backward translocation of tRNAs on improperly translocated ribosomes. Back-translocation proceeds from a post-translocation (POST) complex to a pre-translocation (PRE) complex, thus giving elongation factor G a second chance to translocate the tRNAs correctly. Binds to ribosomes in a GTP-dependent manner. The protein is Elongation factor 4 of Streptomyces coelicolor (strain ATCC BAA-471 / A3(2) / M145).